Consider the following 551-residue polypeptide: (6-4)DNA photolyase (551 aa).

Residues 13 to 157 (AAAMVWFRKG…DVFSPVSHTL (145 aa)) form the Photolyase/cryptochrome alpha/beta domain. Residue E254 participates in phosphate binding. Residues K255, 268-272 (TTVLS), 309-313 (QLLWR), 372-375 (WMHH), R378, 407-409 (DSD), and N413 each bind FAD. Residue W312 coordinates DNA. The segment at 374 to 379 (HHLARH) is interaction with DNA. W419 contacts DNA. Residues 508–551 (YASNRLDDDKPDKGKSSNSSRRKLSAGSQVTPNSSKTKQLKRSS) are disordered. The segment covering 512 to 522 (RLDDDKPDKGK) has biased composition (basic and acidic residues). Over residues 533-544 (AGSQVTPNSSKT) the composition is skewed to polar residues.

The protein belongs to the DNA photolyase class-1 family. FAD is required as a cofactor.

It carries out the reaction (6-4) photoproduct (in DNA) = 2 pyrimidine residues (in DNA).. Involved in repair of UV radiation-induced DNA damage. Catalyzes the photoreactivation of pyrimidine [6-4] pyrimidone photoproduct (6-4 products). The polypeptide is (6-4)DNA photolyase (UVR3) (Oryza sativa subsp. japonica (Rice)).